The chain runs to 442 residues: Trigger factor (442 aa).

One can recognise a PPIase FKBP-type domain in the interval 162 to 247; that stretch reads GDTVTIDYKG…IHEVKSKQLP (86 aa).

Belongs to the FKBP-type PPIase family. Tig subfamily.

The protein localises to the cytoplasm. It catalyses the reaction [protein]-peptidylproline (omega=180) = [protein]-peptidylproline (omega=0). Functionally, involved in protein export. Acts as a chaperone by maintaining the newly synthesized protein in an open conformation. Functions as a peptidyl-prolyl cis-trans isomerase. The chain is Trigger factor from Lactobacillus acidophilus (strain ATCC 700396 / NCK56 / N2 / NCFM).